The following is a 304-amino-acid chain: Homoserine dehydrogenase (304 aa).

Residues Tyr8, Asn10, Val11, Arg38, Arg39, and Ser73 each contribute to the NADP(+) site. Tyr8 contributes to the NADPH binding site. Residues Val11 and Arg38 each contribute to the NADPH site. Val11 is an NAD(+) binding site. Residues Ser73, Ser74, Thr100, and Lys102 each contribute to the NADPH site. Ser73 contributes to the NAD(+) binding site. 2 residues coordinate NADP(+): Thr100 and Lys102. Residues Val129 and Thr133 each contribute to the Na(+) site. The NADP(+) site is built by Gly182 and Glu185. Glu185 and Asp196 together coordinate L-homoserine. Lys200 functions as the Proton donor in the catalytic mechanism. Gly284 contributes to the NADP(+) binding site. Gly284 contacts NADPH. An NAD(+)-binding site is contributed by Gly284.

It belongs to the homoserine dehydrogenase family. In terms of assembly, homodimer. Requires a metal cation as cofactor. The enzyme is activated by reductive cleavage of the interchain disulfide bond between the two subunits.

The enzyme catalyses L-homoserine + NADP(+) = L-aspartate 4-semialdehyde + NADPH + H(+). It carries out the reaction L-homoserine + NAD(+) = L-aspartate 4-semialdehyde + NADH + H(+). Its pathway is amino-acid biosynthesis; L-methionine biosynthesis via de novo pathway; L-homoserine from L-aspartate: step 3/3. It functions in the pathway amino-acid biosynthesis; L-threonine biosynthesis; L-threonine from L-aspartate: step 3/5. Its activity is regulated as follows. Inhibited by cysteine. Its function is as follows. Catalyzes the conversion of L-aspartate-beta-semialdehyde (L-Asa) to L-homoserine (L-Hse), the third step in the biosynthesis of threonine and methionine from aspartate. The protein is Homoserine dehydrogenase of Sulfurisphaera tokodaii (strain DSM 16993 / JCM 10545 / NBRC 100140 / 7) (Sulfolobus tokodaii).